Here is a 286-residue protein sequence, read N- to C-terminus: Polyamine aminopropyltransferase (286 aa).

Positions 5 to 238 constitute a PABS domain; it reads TMWHETLHDQ…GIMTFAWATD (234 aa). An S-methyl-5'-thioadenosine-binding site is contributed by glutamine 33. Spermidine-binding residues include histidine 64 and aspartate 88. S-methyl-5'-thioadenosine-binding positions include glutamate 108 and 140–141; that span reads DG. The active-site Proton acceptor is aspartate 158. 158-161 is a binding site for spermidine; the sequence is DCTD. Residue proline 165 coordinates S-methyl-5'-thioadenosine.

The protein belongs to the spermidine/spermine synthase family. As to quaternary structure, homodimer or homotetramer.

It is found in the cytoplasm. The catalysed reaction is S-adenosyl 3-(methylsulfanyl)propylamine + putrescine = S-methyl-5'-thioadenosine + spermidine + H(+). It participates in amine and polyamine biosynthesis; spermidine biosynthesis; spermidine from putrescine: step 1/1. Catalyzes the irreversible transfer of a propylamine group from the amino donor S-adenosylmethioninamine (decarboxy-AdoMet) to putrescine (1,4-diaminobutane) to yield spermidine. This chain is Polyamine aminopropyltransferase, found in Salmonella arizonae (strain ATCC BAA-731 / CDC346-86 / RSK2980).